The following is a 36-amino-acid chain: Pancreatic polypeptide (36 aa).

At Tyr-36 the chain carries Tyrosine amide.

This sequence belongs to the NPY family.

It is found in the secreted. Functionally, hormone secreted by pancreatic cells that acts as a regulator of pancreatic and gastrointestinal functions probably by signaling through the G protein-coupled receptor NPY4R2. This is Pancreatic polypeptide (PPY) from Ceratotherium simum (White rhinoceros).